The following is a 65-amino-acid chain: Large ribosomal subunit protein bL35 (65 aa).

This sequence belongs to the bacterial ribosomal protein bL35 family.

The sequence is that of Large ribosomal subunit protein bL35 from Sorangium cellulosum (strain So ce56) (Polyangium cellulosum (strain So ce56)).